The following is a 355-amino-acid chain: tRNA pseudouridine synthase D (355 aa).

The active-site Nucleophile is the aspartate 84. Residues 160-306 (GVPNYFGLQR…MAHERRILRL (147 aa)) form the TRUD domain.

This sequence belongs to the pseudouridine synthase TruD family.

It carries out the reaction uridine(13) in tRNA = pseudouridine(13) in tRNA. Functionally, responsible for synthesis of pseudouridine from uracil-13 in transfer RNAs. The polypeptide is tRNA pseudouridine synthase D (Pseudomonas aeruginosa (strain UCBPP-PA14)).